The primary structure comprises 130 residues: S-protein homolog 30 (130 aa).

Residues Asn-64 and Asn-77 are each glycosylated (N-linked (GlcNAc...) asparagine).

Belongs to the plant self-incompatibility (S1) protein family.

It localises to the secreted. The polypeptide is S-protein homolog 30 (Arabidopsis thaliana (Mouse-ear cress)).